The primary structure comprises 1160 residues: Pesticidal crystal protein Cry1Db (1160 aa).

The protein belongs to the delta endotoxin family.

Functionally, promotes colloidosmotic lysis by binding to the midgut epithelial cells of insects. In Bacillus thuringiensis, this protein is Pesticidal crystal protein Cry1Db (cry1Db).